A 131-amino-acid chain; its full sequence is Small ribosomal subunit protein uS8 (131 aa).

It belongs to the universal ribosomal protein uS8 family. As to quaternary structure, part of the 30S ribosomal subunit. Contacts proteins S5 and S12.

One of the primary rRNA binding proteins, it binds directly to 16S rRNA central domain where it helps coordinate assembly of the platform of the 30S subunit. The chain is Small ribosomal subunit protein uS8 from Ralstonia pickettii (strain 12J).